The sequence spans 156 residues: Small ribosomal subunit protein uS7 (156 aa).

Belongs to the universal ribosomal protein uS7 family. In terms of assembly, part of the 30S ribosomal subunit. Contacts proteins S9 and S11.

One of the primary rRNA binding proteins, it binds directly to 16S rRNA where it nucleates assembly of the head domain of the 30S subunit. Is located at the subunit interface close to the decoding center, probably blocks exit of the E-site tRNA. The sequence is that of Small ribosomal subunit protein uS7 from Sorangium cellulosum (strain So ce56) (Polyangium cellulosum (strain So ce56)).